Here is a 494-residue protein sequence, read N- to C-terminus: Aspartyl/glutamyl-tRNA(Asn/Gln) amidotransferase subunit B (494 aa).

This sequence belongs to the GatB/GatE family. GatB subfamily. Heterotrimer of A, B and C subunits.

The catalysed reaction is L-glutamyl-tRNA(Gln) + L-glutamine + ATP + H2O = L-glutaminyl-tRNA(Gln) + L-glutamate + ADP + phosphate + H(+). It catalyses the reaction L-aspartyl-tRNA(Asn) + L-glutamine + ATP + H2O = L-asparaginyl-tRNA(Asn) + L-glutamate + ADP + phosphate + 2 H(+). Its function is as follows. Allows the formation of correctly charged Asn-tRNA(Asn) or Gln-tRNA(Gln) through the transamidation of misacylated Asp-tRNA(Asn) or Glu-tRNA(Gln) in organisms which lack either or both of asparaginyl-tRNA or glutaminyl-tRNA synthetases. The reaction takes place in the presence of glutamine and ATP through an activated phospho-Asp-tRNA(Asn) or phospho-Glu-tRNA(Gln). The sequence is that of Aspartyl/glutamyl-tRNA(Asn/Gln) amidotransferase subunit B from Rhodopseudomonas palustris (strain BisA53).